Here is a 314-residue protein sequence, read N- to C-terminus: MPMYLLDGKRIWVAGHKGMVGSAIIRSLASEDCEVIVADRQKLDLTRQEEVEKFLLKEKPHAVIMAAAKVGGILANDTMPADFIYQNLIMEANVIEGSFRSGVEKLLFLGSSCIYPKYAAQPIREEALLTGPLEPTNEWYAIAKIAGIKLCQAYRKQYGANFISAMPTNLYGPRDKFDLNSSHVVPALIRKAHEAKIKDLGCLSIWGSGTPTRDFLYSEDCSDALVFLLKHYSETEHINIGSGGEISIIELAHIVCRVVGFKGDIVFDTSKPDGTPRKLLSSERLVSMGWRPKTSLELGLAKSYESFVSNVADN.

NADP(+) is bound by residues 15–21 (GHKGMVG) and 109–112 (LGSS). Tyrosine 140 acts as the Proton donor/acceptor in catalysis. NADP(+) is bound by residues lysine 144, 167 to 170 (PTNL), and histidine 183. Substrate-binding residues include lysine 191, tryptophan 206, arginine 213, and aspartate 273.

Belongs to the NAD(P)-dependent epimerase/dehydratase family. Fucose synthase subfamily.

It carries out the reaction GDP-beta-L-fucose + NADP(+) = GDP-4-dehydro-alpha-D-rhamnose + NADPH + H(+). Its pathway is nucleotide-sugar biosynthesis; GDP-L-fucose biosynthesis via de novo pathway; GDP-L-fucose from GDP-alpha-D-mannose: step 2/2. Its function is as follows. Catalyzes the two-step NADP-dependent conversion of GDP-4-dehydro-6-deoxy-D-mannose to GDP-fucose, involving an epimerase and a reductase reaction. The polypeptide is GDP-L-fucose synthase (Sinorhizobium fredii (strain NBRC 101917 / NGR234)).